We begin with the raw amino-acid sequence, 218 residues long: Riboflavin kinase (218 aa).

The interval 1-27 (MRPDGPRDPVAGPDSGPEPPYPVRLSG) is disordered. Residues threonine 44 and asparagine 46 each coordinate Mg(2+). Glutamate 120 serves as the catalytic Nucleophile.

It belongs to the flavokinase family. The cofactor is Zn(2+). Mg(2+) serves as cofactor.

The catalysed reaction is riboflavin + ATP = FMN + ADP + H(+). It participates in cofactor biosynthesis; FMN biosynthesis; FMN from riboflavin (ATP route): step 1/1. Functionally, catalyzes the phosphorylation of riboflavin (vitamin B2) to form flavin mononucleotide (FMN) coenzyme. This Neosartorya fischeri (strain ATCC 1020 / DSM 3700 / CBS 544.65 / FGSC A1164 / JCM 1740 / NRRL 181 / WB 181) (Aspergillus fischerianus) protein is Riboflavin kinase (fmn1).